Consider the following 740-residue polypeptide: ATP-dependent RNA helicase DDX1 (740 aa).

The segment at 1–295 (MAAFSEMGVM…APKALIVEPS (295 aa)) is necessary for interaction with HNRNPK. Positions 1–448 (MAAFSEMGVM…DTVHHVVVPV (448 aa)) are interaction with dsRNA. Positions 1 to 525 (MAAFSEMGVM…KIDCDNLEQY (525 aa)) are necessary for interaction with RELA. The Helicase ATP-binding domain maps to 2–428 (AAFSEMGVMP…SEKIMHFPTW (427 aa)). 46 to 53 (AETGSGKT) is an ATP binding site. One can recognise a B30.2/SPRY domain in the interval 70–247 (DQQEGKKGKT…LKFNFGEEEF (178 aa)). 2 positions are modified to N6-acetyllysine: Lys239 and Lys268. N6-acetyllysine; alternate is present on Lys281. Lys281 participates in a covalent cross-link: Glycyl lysine isopeptide (Lys-Gly) (interchain with G-Cter in SUMO2); alternate. Residues 370 to 373 (DEAD) carry the DEAD box motif. Ser481 carries the post-translational modification Phosphoserine. The region spanning 493-681 (KGEYAVRAIK…QVEPDIKVPV (189 aa)) is the Helicase C-terminal domain. The segment at 525–740 (YFMQQGGGPD…YLPNQLFRTF (216 aa)) is necessary for interaction with HNRNPK.

The protein belongs to the DEAD box helicase family. DDX1 subfamily. In terms of assembly, found in a multi-helicase-TICAM1 complex at least composed of DHX36, DDX1, DDX21 and TICAM1; this complex exists in resting cells with or without poly(I:C) RNA ligand stimulation. Interacts with DHX36. Interacts (via B30.2/SPRY domain) with DDX21 (via N-terminus); this interaction serves as bridges to TICAM1. Interacts with FAM98A (via N- and C-terminus). Interacts with MBNL1. Interacts with CSTF2. Interacts with HNRNPK. Interacts with ATM. Interacts with RELA (via C-terminus). Component of the tRNA-splicing ligase complex. Interacts with PHF5A (via C-terminus). Interacts with PQBP1. Interacts with ERCC6. Post-translationally, phosphorylated by ATM kinase; phosphorylation is increased in response to ionizing radiation (IR). As to expression, testis-specific. Expressed in the germ line stem cells, spermatogonia and spermatocytes of the testis. Also expressed in the seminoma and nonseminoma types of testicular germ cell tumors (TGCTs) (at protein level).

The protein localises to the nucleus. It localises to the cytoplasm. It is found in the cytosol. The protein resides in the cytoplasmic granule. Its subcellular location is the mitochondrion. The catalysed reaction is ATP + H2O = ADP + phosphate + H(+). In terms of biological role, acts as an ATP-dependent RNA helicase, able to unwind both RNA-RNA and RNA-DNA duplexes. Possesses 5' single-stranded RNA overhang nuclease activity. Possesses ATPase activity on various RNA, but not DNA polynucleotides. May play a role in RNA clearance at DNA double-strand breaks (DSBs), thereby facilitating the template-guided repair of transcriptionally active regions of the genome. Together with RELA, acts as a coactivator to enhance NF-kappa-B-mediated transcriptional activation. Acts as a positive transcriptional regulator of cyclin CCND2 expression. Binds to the cyclin CCND2 promoter region. Associates with chromatin at the NF-kappa-B promoter region via association with RELA. Binds to poly(A) RNA. May be involved in 3'-end cleavage and polyadenylation of pre-mRNAs. Component of the tRNA-splicing ligase complex required to facilitate the enzymatic turnover of catalytic subunit RTCB: together with archease (ZBTB8OS), acts by facilitating the guanylylation of RTCB, a key intermediate step in tRNA ligation. Component of a multi-helicase-TICAM1 complex that acts as a cytoplasmic sensor of viral double-stranded RNA (dsRNA) and plays a role in the activation of a cascade of antiviral responses including the induction of pro-inflammatory cytokines via the adapter molecule TICAM1. Specifically binds (via helicase ATP-binding domain) on both short and long poly(I:C) dsRNA. The protein is ATP-dependent RNA helicase DDX1 (Ddx1) of Mus musculus (Mouse).